We begin with the raw amino-acid sequence, 142 residues long: Putative pre-16S rRNA nuclease (142 aa).

This sequence belongs to the YqgF nuclease family.

It localises to the cytoplasm. Its function is as follows. Could be a nuclease involved in processing of the 5'-end of pre-16S rRNA. The chain is Putative pre-16S rRNA nuclease from Staphylococcus epidermidis (strain ATCC 35984 / DSM 28319 / BCRC 17069 / CCUG 31568 / BM 3577 / RP62A).